A 102-amino-acid polypeptide reads, in one-letter code: Large ribosomal subunit protein bL21 (102 aa).

This sequence belongs to the bacterial ribosomal protein bL21 family. Part of the 50S ribosomal subunit. Contacts protein L20.

Its function is as follows. This protein binds to 23S rRNA in the presence of protein L20. The sequence is that of Large ribosomal subunit protein bL21 from Listeria monocytogenes serotype 4b (strain CLIP80459).